The sequence spans 426 residues: uncharacterized protein (426 aa).

This is an uncharacterized protein from Corynebacterium glutamicum (strain ATCC 13032 / DSM 20300 / JCM 1318 / BCRC 11384 / CCUG 27702 / LMG 3730 / NBRC 12168 / NCIMB 10025 / NRRL B-2784 / 534).